Consider the following 611-residue polypeptide: UvrABC system protein C (611 aa).

One can recognise a GIY-YIG domain in the interval 12-96; sequence DQPGIYQYFD…IKQLKPKYNI (85 aa). In terms of domain architecture, UVR spans 202–237; the sequence is EKILEILNQKMQKYAENLQFEEAAEIRDRIKSIESA.

It belongs to the UvrC family. In terms of assembly, interacts with UvrB in an incision complex.

The protein localises to the cytoplasm. Functionally, the UvrABC repair system catalyzes the recognition and processing of DNA lesions. UvrC both incises the 5' and 3' sides of the lesion. The N-terminal half is responsible for the 3' incision and the C-terminal half is responsible for the 5' incision. In Nautilia profundicola (strain ATCC BAA-1463 / DSM 18972 / AmH), this protein is UvrABC system protein C.